Here is a 1077-residue protein sequence, read N- to C-terminus: FKBP12-associated protein 1 homolog (1077 aa).

Residues 1 to 173 (METSKNPSDL…MPKNSKEIKK (173 aa)) form a disordered region. The segment covering 15–29 (ANVKKNRRRFQKSQK) has biased composition (basic residues). Position 33 is a phosphoserine (Ser-33). The span at 52–64 (EEVKTSLKEDSSK) shows a compositional bias: basic and acidic residues. Over residues 76–87 (PTSSVQLNVSKN) the composition is skewed to polar residues. Residues 100–116 (SSKDEELRKHAKGEGKR) show a composition bias toward basic and acidic residues. A compositionally biased stretch (low complexity) spans 136–149 (SSNSSQETSSSKGS). The segment covering 153 to 173 (KSERSREAKSRMPKNSKEIKK) has biased composition (basic and acidic residues). The RING-type; atypical zinc finger occupies 197 to 247 (CSVCTDTINPSTSIWSCGTCYHVFHLSCIRKWCKNSIEQRNEDAWRCPYCQ). NF-X1-type zinc fingers lie at residues 290–308 (CEHP…PCTA), 348–367 (CGEH…ACFE), 420–441 (CGLH…HCPF), 485–503 (CGHR…TCSE), 541–558 (CGRH…SKAQ), 595–614 (CGNH…RCLE), 708–729 (CKTH…SCKK), and 738–760 (CEHV…PCKA). An R3H domain is found at 835–897 (SDFADEVESL…KRNVMVYNKG (63 aa)).

The protein belongs to the NFX1 family.

It is found in the cytoplasm. It localises to the golgi apparatus. The protein localises to the nucleus. May play a role in transcription regulation. This Schizosaccharomyces pombe (strain 972 / ATCC 24843) (Fission yeast) protein is FKBP12-associated protein 1 homolog (fap1).